Reading from the N-terminus, the 458-residue chain is tRNA modification GTPase MnmE (458 aa).

(6S)-5-formyl-5,6,7,8-tetrahydrofolate is bound by residues arginine 32, glutamate 89, and lysine 128. In terms of domain architecture, TrmE-type G spans 224-381 (GVRVVLAGRP…LCQRLKECAG (158 aa)). Asparagine 234 lines the K(+) pocket. GTP contacts are provided by residues 234–239 (NVGKSS), 253–259 (TDVPGTT), and 278–281 (DTAG). Serine 238 serves as a coordination point for Mg(2+). Threonine 253, valine 255, and threonine 258 together coordinate K(+). Threonine 259 contributes to the Mg(2+) binding site. Lysine 458 provides a ligand contact to (6S)-5-formyl-5,6,7,8-tetrahydrofolate.

It belongs to the TRAFAC class TrmE-Era-EngA-EngB-Septin-like GTPase superfamily. TrmE GTPase family. Homodimer. Heterotetramer of two MnmE and two MnmG subunits. K(+) is required as a cofactor.

The protein resides in the cytoplasm. Its function is as follows. Exhibits a very high intrinsic GTPase hydrolysis rate. Involved in the addition of a carboxymethylaminomethyl (cmnm) group at the wobble position (U34) of certain tRNAs, forming tRNA-cmnm(5)s(2)U34. This Nitrosococcus oceani (strain ATCC 19707 / BCRC 17464 / JCM 30415 / NCIMB 11848 / C-107) protein is tRNA modification GTPase MnmE.